The following is a 306-amino-acid chain: Homeobox protein HMX3 (306 aa).

A disordered region spans residues 95-181 (HTPRTEVPDK…DKKPCRKKKT (87 aa)). 2 stretches are compositionally biased toward basic and acidic residues: residues 117 to 143 (GERD…KSPE) and 153 to 174 (EEGK…PDKK). Residues 178–237 (KKKTRTVFSRSQVFQLESTFDMKRYLSSSERAGLAASLHLTETQVKIWFQNRRNKWKRQL) constitute a DNA-binding region (homeobox).

The protein belongs to the HMX homeobox family.

The protein localises to the nucleus. In terms of biological role, transcription factor involved in specification of neuronal cell types and which is required for inner ear and hypothalamus development. Binds to the 5'-CAAGTG-3' core sequence. May act as a stage-specific inhibitor of anf1 in the anterior neural plate during the development. The polypeptide is Homeobox protein HMX3 (hmx3) (Xenopus laevis (African clawed frog)).